A 151-amino-acid chain; its full sequence is Macrodomain Ter protein (151 aa).

It belongs to the MatP family. Homodimer.

Its subcellular location is the cytoplasm. Its function is as follows. Required for spatial organization of the terminus region of the chromosome (Ter macrodomain) during the cell cycle. Prevents early segregation of duplicated Ter macrodomains during cell division. Binds specifically to matS, which is a 13 bp signature motif repeated within the Ter macrodomain. The chain is Macrodomain Ter protein from Yersinia pseudotuberculosis serotype IB (strain PB1/+).